We begin with the raw amino-acid sequence, 164 residues long: UPF0178 protein RPD_2254 (164 aa).

The protein belongs to the UPF0178 family.

The protein is UPF0178 protein RPD_2254 of Rhodopseudomonas palustris (strain BisB5).